The chain runs to 314 residues: Ribosomal protein L11 methyltransferase (314 aa).

Positions 166, 187, 209, and 251 each coordinate S-adenosyl-L-methionine.

Belongs to the methyltransferase superfamily. PrmA family.

The protein resides in the cytoplasm. The catalysed reaction is L-lysyl-[protein] + 3 S-adenosyl-L-methionine = N(6),N(6),N(6)-trimethyl-L-lysyl-[protein] + 3 S-adenosyl-L-homocysteine + 3 H(+). Methylates ribosomal protein L11. The protein is Ribosomal protein L11 methyltransferase of Clostridium tetani (strain Massachusetts / E88).